The primary structure comprises 237 residues: B3 domain-containing protein Os03g0184500 (237 aa).

The TF-B3 DNA-binding region spans 137–228; it reads FVKPMLHSHV…TFKVHIIRAT (92 aa).

The protein resides in the nucleus. The protein is B3 domain-containing protein Os03g0184500 of Oryza sativa subsp. japonica (Rice).